The sequence spans 238 residues: Ribosomal RNA small subunit methyltransferase G (238 aa).

S-adenosyl-L-methionine is bound by residues glycine 106, leucine 111, isoleucine 157–glutamate 158, and arginine 170.

It belongs to the methyltransferase superfamily. RNA methyltransferase RsmG family.

Its subcellular location is the cytoplasm. It carries out the reaction guanosine(527) in 16S rRNA + S-adenosyl-L-methionine = N(7)-methylguanosine(527) in 16S rRNA + S-adenosyl-L-homocysteine. Functionally, specifically methylates the N7 position of guanine in position 527 of 16S rRNA. The protein is Ribosomal RNA small subunit methyltransferase G of Psychrobacter arcticus (strain DSM 17307 / VKM B-2377 / 273-4).